Consider the following 364-residue polypeptide: MKGLILVGGFGTRLRPLTLTLPKPLVEFCNKPMIVHQIEALVAAGVTDIVLAVNYRPEIMEKFLAEYEEKYNINIEFSVESEPLDTAGPLKLAERILGKDDSPFFVLNSDVICDYPFKELLEFHKAHGDEGTIVVTKVEEPSKYGVVVHKPNHPSRIDRFVEKPVEFVGNRINAGMYIFNPSVLKRIELRPTSIEKETFPAMVADNQLHSFDLEGFWMDVGQPKDFLSGTCLYLSSLTKKGSKELTPPTEPYVHGGNVMIHPSAKIGKNCRIGPNVTIGPDVVVGDGVRLQRCVLLKGSKVKDHAWVKSTIVGWNSTVGRWARLENVTVLGDDVTIGDEIYVNGGSVLPHKSIKANVDVPAIIM.

It belongs to the transferase hexapeptide repeat family.

The protein resides in the cytoplasm. It carries out the reaction alpha-D-mannose 1-phosphate + GTP + H(+) = GDP-alpha-D-mannose + diphosphate. It functions in the pathway nucleotide-sugar biosynthesis; GDP-alpha-D-mannose biosynthesis; GDP-alpha-D-mannose from alpha-D-mannose 1-phosphate (GTP route): step 1/1. Functionally, involved in cell wall synthesis where it is required for glycosylation. Involved in cell cycle progression through cell-size checkpoint. The sequence is that of Mannose-1-phosphate guanyltransferase (mpg1) from Hypocrea jecorina (Trichoderma reesei).